The sequence spans 192 residues: UPF0312 protein PputGB1_5030 (192 aa).

The first 23 residues, M1–A23, serve as a signal peptide directing secretion.

This sequence belongs to the UPF0312 family. Type 1 subfamily.

It is found in the periplasm. This Pseudomonas putida (strain GB-1) protein is UPF0312 protein PputGB1_5030.